The sequence spans 248 residues: Inner membrane protein pE248R (248 aa).

Glycine 2 carries the N-myristoyl glycine; by host lipid modification. The Cytoplasmic segment spans residues 2–199 (GGSTSKNSFK…ADAISAVFKN (198 aa)). The helical transmembrane segment at 200–220 (IMVAAVVIVLIIVGFIAVFYF) threads the bilayer. Topologically, residues 221–248 (LHSRHRHEEEEEAEPLISNKVLKNAAVS) are extracellular.

It belongs to the asfivirus E248R family. Interacts with A151R.

It localises to the host membrane. Its subcellular location is the virion membrane. Functionally, essential for viral fusion with host endosomal membrane and core release. The sequence is that of Inner membrane protein pE248R from Ornithodoros (relapsing fever ticks).